We begin with the raw amino-acid sequence, 495 residues long: Meiosis-specific nuclear structural protein 1 (495 aa).

The segment at methionine 1–glutamate 314 is interaction with BBOF1. The stretch at valine 28–lysine 410 forms a coiled coil. The residue at position 188 (tyrosine 188) is a Phosphotyrosine.

The protein belongs to the MNS1 family. In terms of assembly, able to form oligomers. Microtubule inner protein component of sperm flagellar doublet microtubules. Interacts with ODAD1. Interacts with BBOF1. As to expression, expressed in nasal respiratory epithelium and in the sperm.

The protein resides in the nucleus. Its subcellular location is the cytoplasm. The protein localises to the cytoskeleton. It localises to the cilium axoneme. It is found in the flagellum axoneme. Microtubule inner protein (MIP) part of the dynein-decorated doublet microtubules (DMTs) in cilia axoneme, which is required for motile cilia beating. May play a role in the control of meiotic division and germ cell differentiation through regulation of pairing and recombination during meiosis. Required for sperm flagella assembly. May play a role in the assembly and function of the outer dynein arm-docking complex (ODA-DC). ODA-DC mediates outer dynein arms (ODA) binding onto the axonemal doublet microtubules. In Homo sapiens (Human), this protein is Meiosis-specific nuclear structural protein 1.